The sequence spans 428 residues: Maltoporin (428 aa).

The signal sequence occupies residues 1-24 (MTTLRKLPIALAVAAGVLSTQAMA).

The protein belongs to the porin LamB (TC 1.B.3) family. Homotrimer formed of three 18-stranded antiparallel beta-barrels, containing three independent channels.

Its subcellular location is the cell outer membrane. It catalyses the reaction beta-maltose(in) = beta-maltose(out). Its function is as follows. Involved in the transport of maltose and maltodextrins. This Yersinia enterocolitica serotype O:8 / biotype 1B (strain NCTC 13174 / 8081) protein is Maltoporin.